The following is a 121-amino-acid chain: Small ribosomal subunit protein uS13 (121 aa).

The disordered stretch occupies residues 93-121 (RHLPVRGQNTKNNARTRKGPAVSIAGKKK).

This sequence belongs to the universal ribosomal protein uS13 family. Part of the 30S ribosomal subunit. Forms a loose heterodimer with protein S19. Forms two bridges to the 50S subunit in the 70S ribosome.

Functionally, located at the top of the head of the 30S subunit, it contacts several helices of the 16S rRNA. In the 70S ribosome it contacts the 23S rRNA (bridge B1a) and protein L5 of the 50S subunit (bridge B1b), connecting the 2 subunits; these bridges are implicated in subunit movement. Contacts the tRNAs in the A and P-sites. The protein is Small ribosomal subunit protein uS13 of Ligilactobacillus salivarius (strain UCC118) (Lactobacillus salivarius).